We begin with the raw amino-acid sequence, 477 residues long: Protein DETOXIFICATION 5 (477 aa).

12 consecutive transmembrane segments (helical) span residues 38-58, 72-92, 113-133, 146-166, 187-207, 211-231, 263-283, 292-312, 333-353, 376-396, 411-431, and 436-456; these read AAPMATVTVSQYLLPVISVMV, LATAFANVSGFGIMYGLVGAL, FSAIVSNVPIVVLISILWFYM, ISKVAGSYAVCLIPALLAQAV, AITTLLFHIPVCLILVYAFGL, GAALAIGLSYWFNVLILALYV, AAMTTIEWSLFELLILSSGLL, VLSICLTTSSLHCVIPMGIGA, AVFAGIFLWFLEATICSTLLF, LSSLLCLSFMVDGFSSVLDGV, VVAYYLLGAPVGFFLGFWGHM, and LWIGVIVGSTAQGIILAIVTA.

The protein belongs to the multi antimicrobial extrusion (MATE) (TC 2.A.66.1) family.

The protein resides in the membrane. The chain is Protein DETOXIFICATION 5 from Arabidopsis thaliana (Mouse-ear cress).